Here is a 195-residue protein sequence, read N- to C-terminus: Imidazoleglycerol-phosphate dehydratase (195 aa).

Belongs to the imidazoleglycerol-phosphate dehydratase family.

The protein localises to the cytoplasm. The catalysed reaction is D-erythro-1-(imidazol-4-yl)glycerol 3-phosphate = 3-(imidazol-4-yl)-2-oxopropyl phosphate + H2O. Its pathway is amino-acid biosynthesis; L-histidine biosynthesis; L-histidine from 5-phospho-alpha-D-ribose 1-diphosphate: step 6/9. The chain is Imidazoleglycerol-phosphate dehydratase from Geobacter metallireducens (strain ATCC 53774 / DSM 7210 / GS-15).